Here is a 20-residue protein sequence, read N- to C-terminus: Collagenolytic protease 35 kDa 2 (20 aa).

The region spanning 1-20 is the Peptidase S1 domain; it reads IVGGTEVTPGEIPYQLSFQD. The disordered stretch occupies residues 1 to 20; sequence IVGGTEVTPGEIPYQLSFQD.

This sequence belongs to the peptidase S1 family.

The catalysed reaction is Hydrolysis of proteins, with broad specificity for peptide bonds. Native collagen is cleaved about 75% of the length of the molecule from the N-terminus. Low activity on small molecule substrates of both trypsin and chymotrypsin.. Functionally, this enzyme is a serine protease capable of degrading the native triple helix of collagen. The polypeptide is Collagenolytic protease 35 kDa 2 (Chionoecetes opilio (Atlantic snow crab)).